The sequence spans 147 residues: Succinate dehydrogenase assembly factor 2, mitochondrial (147 aa).

This sequence belongs to the SDHAF2 family. Interacts with the flavoprotein subunit within the SDH catalytic dimer.

Its subcellular location is the mitochondrion matrix. Its function is as follows. Plays an essential role in the assembly of succinate dehydrogenase (SDH), an enzyme complex (also referred to as respiratory complex II) that is a component of both the tricarboxylic acid (TCA) cycle and the mitochondrial electron transport chain, and which couples the oxidation of succinate to fumarate with the reduction of ubiquinone (coenzyme Q) to ubiquinol. Required for flavinylation (covalent attachment of FAD) of the flavoprotein subunit of the SDH catalytic dimer. In Drosophila grimshawi (Hawaiian fruit fly), this protein is Succinate dehydrogenase assembly factor 2, mitochondrial.